The following is a 354-amino-acid chain: NADH-quinone oxidoreductase subunit H (354 aa).

8 helical membrane-spanning segments follow: residues L23–W43, Y91–F111, L124–A144, I162–L182, I203–V223, G250–L270, I291–L311, and I330–W350.

Belongs to the complex I subunit 1 family. In terms of assembly, NDH-1 is composed of 14 different subunits. Subunits NuoA, H, J, K, L, M, N constitute the membrane sector of the complex.

It is found in the cell inner membrane. It catalyses the reaction a quinone + NADH + 5 H(+)(in) = a quinol + NAD(+) + 4 H(+)(out). Functionally, NDH-1 shuttles electrons from NADH, via FMN and iron-sulfur (Fe-S) centers, to quinones in the respiratory chain. The immediate electron acceptor for the enzyme in this species is believed to be ubiquinone. Couples the redox reaction to proton translocation (for every two electrons transferred, four hydrogen ions are translocated across the cytoplasmic membrane), and thus conserves the redox energy in a proton gradient. This subunit may bind ubiquinone. The polypeptide is NADH-quinone oxidoreductase subunit H (Ralstonia pickettii (strain 12J)).